We begin with the raw amino-acid sequence, 61 residues long: Small ribosomal subunit protein uS14B (61 aa).

Positions 24, 27, 40, and 43 each coordinate Zn(2+).

It belongs to the universal ribosomal protein uS14 family. Zinc-binding uS14 subfamily. In terms of assembly, part of the 30S ribosomal subunit. Contacts proteins S3 and S10. The cofactor is Zn(2+).

Its function is as follows. Binds 16S rRNA, required for the assembly of 30S particles and may also be responsible for determining the conformation of the 16S rRNA at the A site. The protein is Small ribosomal subunit protein uS14B of Salinispora arenicola (strain CNS-205).